A 326-amino-acid chain; its full sequence is MRPELALVPGEPAGIGPELCVRLVQQPREDCRLLAFADPDTLRAAAAALNLPLQLLPEDAEARVPGDLRVRAVPNAVPSHFGHADPANAGAVIGALLGAGQACLSGELHGVVTGPVHKAVINEGGIAYSGTTELLADQAGVKVVMMLANHIVRVALATTHLPLRDVADAITAPGLEHTLRTVHAALRREFGLAAPRIAVLGLNPHAGEDGHLGREELDLVIPLLQRLRAEGMDLVGPLPADTAFLPAKLAGFDTVLAMYHDQGLPVLKYSGFEQAVNLTLGLPYPRVAVDHGTALDLAGRGIADPSSLQAATTLCAQLARQRTLSA.

Thr132 contributes to the substrate binding site. Positions 160, 205, and 260 each coordinate a divalent metal cation. Substrate contacts are provided by Lys268, Asn277, and Arg286.

Belongs to the PdxA family. As to quaternary structure, homodimer. The cofactor is Zn(2+). Requires Mg(2+) as cofactor. It depends on Co(2+) as a cofactor.

It is found in the cytoplasm. It carries out the reaction 4-(phosphooxy)-L-threonine + NAD(+) = 3-amino-2-oxopropyl phosphate + CO2 + NADH. It functions in the pathway cofactor biosynthesis; pyridoxine 5'-phosphate biosynthesis; pyridoxine 5'-phosphate from D-erythrose 4-phosphate: step 4/5. In terms of biological role, catalyzes the NAD(P)-dependent oxidation of 4-(phosphooxy)-L-threonine (HTP) into 2-amino-3-oxo-4-(phosphooxy)butyric acid which spontaneously decarboxylates to form 3-amino-2-oxopropyl phosphate (AHAP). This is 4-hydroxythreonine-4-phosphate dehydrogenase from Stenotrophomonas maltophilia (strain R551-3).